Reading from the N-terminus, the 278-residue chain is NAD kinase (278 aa).

Aspartate 67 (proton acceptor) is an active-site residue. NAD(+)-binding positions include 67-68, arginine 72, 137-138, lysine 148, arginine 165, aspartate 167, 178-183, and glutamine 237; these read DG, NE, and TGYALS.

The protein belongs to the NAD kinase family. It depends on a divalent metal cation as a cofactor.

Its subcellular location is the cytoplasm. It carries out the reaction NAD(+) + ATP = ADP + NADP(+) + H(+). Functionally, involved in the regulation of the intracellular balance of NAD and NADP, and is a key enzyme in the biosynthesis of NADP. Catalyzes specifically the phosphorylation on 2'-hydroxyl of the adenosine moiety of NAD to yield NADP. This chain is NAD kinase, found in Thermococcus gammatolerans (strain DSM 15229 / JCM 11827 / EJ3).